Here is a 185-residue protein sequence, read N- to C-terminus: Pro-adrenomedullin (185 aa).

Residues 1–21 (MKLVSVALMYLGSLAFLGADT) form the signal peptide. An Arginine amide modification is found at arginine 41. The propeptide occupies 45 to 92 (ELRMSSSYPTGLADVKAGPAQTLIRPQDMKGASRSPEDSSPDAARIRV). The interval 60-87 (KAGPAQTLIRPQDMKGASRSPEDSSPDA) is disordered. Cysteine 110 and cysteine 115 form a disulfide bridge. Residues 133–185 (DNVAPRSKISPQGYGRRRRRSLPEAGPGRTLVSSKPQAHGAPAPPSGSAPHFL) form a disordered region. Tyrosine 146 bears the Tyrosine amide mark. A propeptide spans 148-185 (RRRRRSLPEAGPGRTLVSSKPQAHGAPAPPSGSAPHFL) (preproAM C-terminal fragment).

It belongs to the adrenomedullin family. Highest levels found in pheochromocytoma and adrenal medulla. Also found in lung, ventricle and kidney tissues.

The protein localises to the secreted. Functionally, adrenomedullin/ADM and proadrenomedullin N-20 terminal peptide/PAMP are peptide hormones that act as potent hypotensive and vasodilatator agents. Numerous actions have been reported most related to the physiologic control of fluid and electrolyte homeostasis. In the kidney, ADM is diuretic and natriuretic, and both ADM and PAMP inhibit aldosterone secretion by direct adrenal actions. In pituitary gland, both peptides at physiologically relevant doses inhibit basal ACTH secretion. Both peptides appear to act in brain and pituitary gland to facilitate the loss of plasma volume, actions which complement their hypotensive effects in blood vessels. Its function is as follows. ADM function is mediated by the CALCRL-RAMP2 and CALCRL-RAMP3 receptor complexes with ADM showing the highest potency for the CALCRL-RAMP2 complex. This is Pro-adrenomedullin from Homo sapiens (Human).